Reading from the N-terminus, the 384-residue chain is Urea transporter 1 (384 aa).

The tract at residues 1-23 (MDDNPTAVKLDQGGNQAPQGQGR) is disordered. 5 consecutive transmembrane segments (helical) span residues 61–81 (ISQV…VGLL), 85–105 (PWCA…ALLL), 111–131 (AITA…MAIY), 138–158 (FWWL…FSSA), and 169–189 (PVFT…TGHF). The N-linked (GlcNAc...) asparagine glycan is linked to asparagine 206. 3 consecutive transmembrane segments (helical) span residues 237–257 (GGIF…HAAI), 279–299 (GLWG…FMAL), and 327–347 (VVGL…FLLL).

Belongs to the urea transporter family. In terms of assembly, homotrimer; each subunit contains a pore through which urea permeates. Identified in a complex with STOM.

Its subcellular location is the cell membrane. It is found in the basolateral cell membrane. It carries out the reaction urea(in) = urea(out). Mediates the transport of urea driven by a concentration gradient across the cell membranes of erythrocytes and the renal inner medullary collecting duct which is critical to the urinary concentrating mechanism. Facilitates water transport in erythrocytes. This chain is Urea transporter 1 (SLC14A1), found in Ovis aries (Sheep).